The sequence spans 272 residues: Energy-coupling factor transporter ATP-binding protein EcfA1 (272 aa).

An ABC transporter domain is found at 5 to 239 (IKIDNLKYSY…RKALHENGLE (235 aa)). 37–44 (GHNGSGKS) contributes to the ATP binding site. The active-site Proton acceptor is the glutamate 163.

The protein belongs to the ABC transporter superfamily. Energy-coupling factor EcfA family. As to quaternary structure, forms a stable energy-coupling factor (ECF) transporter complex probably composed of 2 membrane-embedded substrate-binding proteins (S component), 2 ATP-binding proteins (A component) and 2 transmembrane proteins (T component). This complex interacts with a number of substrate-specific components, including FolT, PanT and RibU for 5-formyltetrahydrofolate, pantothenate and riboflavin respectively.

It is found in the cell membrane. Its function is as follows. ATP-binding (A) component of a common energy-coupling factor (ECF) ABC-transporter complex. Unlike classic ABC transporters this ECF transporter provides the energy necessary to transport a number of different substrates including 5-formyltetrahydrofolate, pantothenate and riboflavin. Expression of the complex plus FolT in E.coli allows 5-formyltetrahydrofolate uptake; 5-formyltetrahydrofolate is not taken up in the absence of FolT or the EcfA1A2T complex. This chain is Energy-coupling factor transporter ATP-binding protein EcfA1, found in Leuconostoc mesenteroides subsp. mesenteroides (strain ATCC 8293 / DSM 20343 / BCRC 11652 / CCM 1803 / JCM 6124 / NCDO 523 / NBRC 100496 / NCIMB 8023 / NCTC 12954 / NRRL B-1118 / 37Y).